The sequence spans 323 residues: Transaldolase (323 aa).

K133 (schiff-base intermediate with substrate) is an active-site residue.

Belongs to the transaldolase family. Type 1 subfamily. In terms of assembly, monomer.

It carries out the reaction D-sedoheptulose 7-phosphate + D-glyceraldehyde 3-phosphate = D-erythrose 4-phosphate + beta-D-fructose 6-phosphate. It participates in carbohydrate degradation; pentose phosphate pathway; D-glyceraldehyde 3-phosphate and beta-D-fructose 6-phosphate from D-ribose 5-phosphate and D-xylulose 5-phosphate (non-oxidative stage): step 2/3. Its function is as follows. Transaldolase important for the balance of metabolites in the pentose-phosphate pathway. Involved in xylose fermentation to ethanol. This chain is Transaldolase, found in Fusarium oxysporum f. sp. lycopersici (strain 4287 / CBS 123668 / FGSC 9935 / NRRL 34936) (Fusarium vascular wilt of tomato).